The following is a 454-amino-acid chain: L-cysteine desulfhydrase-like protein lolT1 (454 aa).

Lysine 227 carries the post-translational modification N6-(pyridoxal phosphate)lysine.

The protein belongs to the class-V pyridoxal-phosphate-dependent aminotransferase family. Pyridoxal 5'-phosphate is required as a cofactor.

Its pathway is alkaloid biosynthesis. L-cysteine desulfhydrase-like protein; part of the gene cluster that mediates the biosynthesis of loline alkaloids, potent insecticidal agents composed of a pyrrolizidine ring system and an uncommon ether bridge linking carbons 2 and 7. Lolines are structurally differentiated by the various modifications of the L-amino group and include norloline, loline, N-methylloline, N-acetylloline, N-acetylnorloline, and N-formylloline. The first committed step is the condensation of O-acetyl-L-homoserine (derived from L-aspartic acid) and L-proline, probably catalyzed by the gamma-type pyridoxal 5'-phosphate(PLP)-dependent enzyme lolC, to give the diamino diacid, NACPP. Ensuing cyclization, decarboxylation, and acetylation steps yield 1-exo-acetamidopyrrolizidine (AcAP). LolO is required for installation of the ether bridge upon the pathway intermediate, 1-exo-acetamidopyrrolizidine (AcAP). In sequential 2-oxoglutarate- and O(2)-consuming steps, lolO removes hydrogens from C2 and C7 of AcAP to form both carbon-oxygen bonds in N-acetylnorloline (NANL), the precursor to all other lolines. The enzymes lolD, lolE, lolF and lolT have also been proposed to be involved in the ether-bridge installation. Further processing of the exocyclic moiety of NANL by fungal N-acetamidase (LolN), methyltransferase (LolM), and cytochrome P450 (LolP) enzymes, with occasional involvement of a plant acetyltransferase, generates the other known lolines. LolN transforms NANL to norlonine which is monomethylated and dimethylated to respectively lonine and N-methyllonine (NML) by lolM. LolP catalyzes hydroxylation of the methyl group in N-methylloline (NML) and further oxygenation to N-formylloline (NFL). A plant acetyltransferase is responsible for the acetylation of loline to form N-acetylloline (NAL). LolA might interact with aspartate kinase to prevent feedback inhibition of its activity by these end products and thereby promote production of L-homoserine from L-aspartate. This is L-cysteine desulfhydrase-like protein lolT1 from Epichloe uncinata (Endophyte fungus).